A 198-amino-acid polypeptide reads, in one-letter code: NAD(P)H dehydrogenase (quinone) (198 aa).

In terms of domain architecture, Flavodoxin-like spans 4 to 189 (ILVLYYSMYG…AIARYQGEHV (186 aa)). Residues 10–15 (SMYGHI) and 78–80 (TRF) each bind FMN. Tyr-12 contributes to the NAD(+) binding site. Position 98 (Trp-98) interacts with substrate. FMN contacts are provided by residues 113–118 (STGTGG) and His-133.

This sequence belongs to the WrbA family. FMN serves as cofactor.

It carries out the reaction a quinone + NADH + H(+) = a quinol + NAD(+). The enzyme catalyses a quinone + NADPH + H(+) = a quinol + NADP(+). The polypeptide is NAD(P)H dehydrogenase (quinone) (Klebsiella pneumoniae (strain 342)).